A 122-amino-acid polypeptide reads, in one-letter code: MRLTSILVLVIAATFHTTGTALTLTKDSKAGIANGDSPASGDFIDANSARLLRRVEKDKVDYEQDEQRSFGALKDAVKKLNPVTAVKKFFKQRAKRKKVIQTARDADNNLAWAMKEVYKAAN.

The first 21 residues, 1 to 21, serve as a signal peptide directing secretion; it reads MRLTSILVLVIAATFHTTGTA. The RxLR-dEER motif lies at 50 to 68; that stretch reads RLLRRVEKDKVDYEQDEQR. The interval 69 to 86 is TAP1-binding; that stretch reads SFGALKDAVKKLNPVTAV. The interval 87–98 is nuclear localization signal (NLS); the sequence is KKFFKQRAKRKK.

Belongs to the RxLR effector family. As to quaternary structure, interacts with host acetyl transferase TAP1.

It is found in the secreted. Its subcellular location is the host nucleus. Functionally, effector that suppresses plant defense responses during the early stages of pathogen infection. Suppresses cell death induced by effectors and PAMPs in plant hosts. Interacts with host acetyltransferase TAP1 and causes TAP1 relocation into the nucleus where it acetylates histones H2A and H3 during early infection, thereby promoting susceptibility of host plant to P.sojae. In Phytophthora sojae (strain P6497) (Soybean stem and root rot agent), this protein is RxLR effector protein Avh52.